Here is a 247-residue protein sequence, read N- to C-terminus: Adenosylcobinamide-GDP ribazoletransferase (247 aa).

Helical transmembrane passes span 34 to 54 (IITF…VFMA), 59 to 79 (FGVP…TGGF), 113 to 133 (GGLA…ELAL), 138 to 158 (ILAS…LLMY), and 194 to 214 (VLLP…AIFI).

Belongs to the CobS family. The cofactor is Mg(2+).

Its subcellular location is the cell inner membrane. It catalyses the reaction alpha-ribazole + adenosylcob(III)inamide-GDP = adenosylcob(III)alamin + GMP + H(+). It carries out the reaction alpha-ribazole 5'-phosphate + adenosylcob(III)inamide-GDP = adenosylcob(III)alamin 5'-phosphate + GMP + H(+). Its pathway is cofactor biosynthesis; adenosylcobalamin biosynthesis; adenosylcobalamin from cob(II)yrinate a,c-diamide: step 7/7. Joins adenosylcobinamide-GDP and alpha-ribazole to generate adenosylcobalamin (Ado-cobalamin). Also synthesizes adenosylcobalamin 5'-phosphate from adenosylcobinamide-GDP and alpha-ribazole 5'-phosphate. This chain is Adenosylcobinamide-GDP ribazoletransferase, found in Escherichia coli O17:K52:H18 (strain UMN026 / ExPEC).